A 185-amino-acid chain; its full sequence is Elongation factor P (185 aa).

Belongs to the elongation factor P family.

The protein localises to the cytoplasm. Its pathway is protein biosynthesis; polypeptide chain elongation. In terms of biological role, involved in peptide bond synthesis. Stimulates efficient translation and peptide-bond synthesis on native or reconstituted 70S ribosomes in vitro. Probably functions indirectly by altering the affinity of the ribosome for aminoacyl-tRNA, thus increasing their reactivity as acceptors for peptidyl transferase. This is Elongation factor P from Burkholderia ambifaria (strain MC40-6).